Here is a 221-residue protein sequence, read N- to C-terminus: Probable septum site-determining protein MinC (221 aa).

Belongs to the MinC family. As to quaternary structure, interacts with MinD and FtsZ.

Functionally, cell division inhibitor that blocks the formation of polar Z ring septums. Rapidly oscillates between the poles of the cell to destabilize FtsZ filaments that have formed before they mature into polar Z rings. Prevents FtsZ polymerization. The protein is Probable septum site-determining protein MinC of Shewanella baltica (strain OS223).